Here is a 210-residue protein sequence, read N- to C-terminus: Large ribosomal subunit protein uL3 (210 aa).

This sequence belongs to the universal ribosomal protein uL3 family. In terms of assembly, part of the 50S ribosomal subunit. Forms a cluster with proteins L14 and L19.

One of the primary rRNA binding proteins, it binds directly near the 3'-end of the 23S rRNA, where it nucleates assembly of the 50S subunit. This is Large ribosomal subunit protein uL3 from Geobacter sulfurreducens (strain ATCC 51573 / DSM 12127 / PCA).